A 226-amino-acid chain; its full sequence is MSKKGKKYIAAFSKVDKSKFYSIEDAISLLKEIKFVKFDETIDISINLNLKKNHTVRDTIVLPNQFMKPKRILVFAKGDRADEARAFGATYIGDDDLINKIKSGWDEFDIVVATPDMMKDVGRLGPILGKRGLMPNPKTQTVTNNLKDAINSLKKGRTEFRANKNGVISFSFGKSSMDNAKIKENYDEFIKEVVKKRPSDLKGAFIDSIYISSTMGPSIKIDFVWR.

The protein belongs to the universal ribosomal protein uL1 family. In terms of assembly, part of the 50S ribosomal subunit.

Its function is as follows. Binds directly to 23S rRNA. The L1 stalk is quite mobile in the ribosome, and is involved in E site tRNA release. Protein L1 is also a translational repressor protein, it controls the translation of the L11 operon by binding to its mRNA. The protein is Large ribosomal subunit protein uL1 of Borrelia garinii subsp. bavariensis (strain ATCC BAA-2496 / DSM 23469 / PBi) (Borreliella bavariensis).